The sequence spans 318 residues: NADH-ubiquinone oxidoreductase chain 1 (318 aa).

8 consecutive transmembrane segments (helical) span residues 2 to 22 (PMIN…FLML), 69 to 89 (ALYI…WTPL), 100 to 120 (LGLL…LWSG), 147 to 167 (AIIL…TLIT), 171 to 191 (HIWL…STLA), 222 to 242 (LFFM…TMIF), 253 to 273 (ELYT…FLWI), and 294 to 314 (LPLT…IASI).

It belongs to the complex I subunit 1 family. As to quaternary structure, core subunit of respiratory chain NADH dehydrogenase (Complex I) which is composed of 45 different subunits.

Its subcellular location is the mitochondrion inner membrane. The catalysed reaction is a ubiquinone + NADH + 5 H(+)(in) = a ubiquinol + NAD(+) + 4 H(+)(out). Core subunit of the mitochondrial membrane respiratory chain NADH dehydrogenase (Complex I) which catalyzes electron transfer from NADH through the respiratory chain, using ubiquinone as an electron acceptor. Essential for the catalytic activity and assembly of complex I. This is NADH-ubiquinone oxidoreductase chain 1 (MT-ND1) from Hylobates lar (Lar gibbon).